The following is a 207-amino-acid chain: MSEGILFIISAPSGTGKSSLIQGLLKSKTLYNTRVSISHTTRIIRPGELHGKHYYFISKKEFEIMIKQEYFLEYAKVFSNYYGTSRKYIEKMLFSGIDVFLDIDWQGAKQIKCKMPKSKSIFLLPPSKDTLYKRLRERGQDSDSVIANRMEKAVDEMQHYSEYDYLIINDDFKQAVNDLITIITAEHLCLFHQKNKHNLLISNLLKC.

Positions 4–184 (GILFIISAPS…AVNDLITIIT (181 aa)) constitute a Guanylate kinase-like domain. 11-18 (APSGTGKS) contacts ATP.

It belongs to the guanylate kinase family.

The protein localises to the cytoplasm. The catalysed reaction is GMP + ATP = GDP + ADP. In terms of biological role, essential for recycling GMP and indirectly, cGMP. This chain is Guanylate kinase (gmk), found in Buchnera aphidicola subsp. Acyrthosiphon pisum (strain APS) (Acyrthosiphon pisum symbiotic bacterium).